The following is a 103-amino-acid chain: Small ribosomal subunit protein uS10 (103 aa).

It belongs to the universal ribosomal protein uS10 family. As to quaternary structure, part of the 30S ribosomal subunit.

Functionally, involved in the binding of tRNA to the ribosomes. The polypeptide is Small ribosomal subunit protein uS10 (Bordetella parapertussis (strain 12822 / ATCC BAA-587 / NCTC 13253)).